The chain runs to 1578 residues: Formin-2 (1578 aa).

Basic and acidic residues-rich tracts occupy residues 1–17 (MGNQDGKLKRSAGDASH), 26–35 (AGPRDAEITK), and 57–66 (TSKKKSKSDS). The tract at residues 1-73 (MGNQDGKLKR…SDSRASVFSN (73 aa)) is disordered. The residue at position 89 (S89) is a Phosphoserine. Disordered stretches follow at residues 208 to 230 (KLLLQDSEEPAAPPTAISPQPGA), 244 to 383 (EAEK…PSPR), and 401 to 458 (RQLS…GLSR). Polar residues-rich tracts occupy residues 273 to 282 (SSGSHLTSET) and 290 to 300 (SAVTDSLSSPA). Positions 322–333 (DTDEECEEDAFE) are enriched in acidic residues. The span at 351–364 (ASQRLEKEPEEGMR) shows a compositional bias: basic and acidic residues. Composition is skewed to low complexity over residues 404–418 (SSPNHSPSQSPNQSP) and 427–442 (SVSRSSRTALASAAAP). Residues S459, S489, and S493 each carry the phosphoserine modification. The disordered stretch occupies residues 587–634 (SMDYSEGQFPRREPSMWPSSKLPEEEPSPKDVDTEPKSSILESPKKCS). Residues 608–622 (LPEEEPSPKDVDTEP) are compositionally biased toward basic and acidic residues. Residues 643–683 (DVKSEGQATVIQQLEQTIEDLRTKIAELEKQYPALDLEGPR) are a coiled coil. Disordered regions lie at residues 714–765 (RTLE…SGPQ), 786–836 (DAQQ…GNNC), and 880–944 (PALQ…MGIS). Residues 735–1124 (PPPKAPPEGL…GCGFLFPPLP (390 aa)) form the FH1 domain. Positions 786 to 795 (DAQQIQSASQ) are enriched in polar residues. Positions 803 to 817 (LGSDSQGQPSQPSLH) are enriched in low complexity. Positions 818–827 (TESETSHEHS) are enriched in basic and acidic residues. A compositionally biased stretch (pro residues) spans 893 to 944 (LPAPPQPPPLPGLGVPPPPPAPPLPGMGIPPPPPLPGMGIPPPPPLPGMGIS). Repeat copies occupy residues 919 to 929 (MGIPPPPPLPG), 930 to 940 (MGIPPPPPLPG), 941 to 951 (MGISPLPPLPG), 952 to 962 (MGIPPPPPLPG), 963 to 973 (VGIPPPPPLPG), 974 to 984 (VGIPPPPPLPG), 985 to 995 (VGIPPPPPLPG), 996 to 1006 (VGIPPPPPLPG), 1007 to 1017 (VGIPPPPPLPG), 1018 to 1028 (VGIPPPPPLPG), 1029 to 1039 (VGIPPPPPLPG), and 1040 to 1050 (VGIPPPPPLPG). The tract at residues 919–1039 (MGIPPPPPLP…GIPPPPPLPG (121 aa)) is 12 X 11 AA tandem repeats of [MV]-G-I-P-P-P-P-P-L-P-G. The segment covering 1037-1097 (LPGVGIPPPP…PPPPLLPGSG (61 aa)) has biased composition (pro residues). The interval 1037-1108 (LPGVGIPPPP…PHSSQVGSST (72 aa)) is disordered. One can recognise an FH2 domain in the interval 1139–1554 (RKQLIEPCRP…KEAEEVCRQK (416 aa)). Residues 1419-1455 (QELFQASQMKFEDFQKDLRKLKKDLKACEAEAGKVYQ) adopt a coiled-coil conformation. Positions 1571-1578 (KAKISMKT) are important for interaction with SPIRE1.

The protein belongs to the formin homology family. Cappuccino subfamily. As to quaternary structure, interacts with SPIRE1. Binds actin. Interacts with CDKN1A. In terms of tissue distribution, detected in brain and in oocytes (at protein level). Expressed almost exclusively in the developing and mature central nervous system. Detected in oocytes.

It is found in the cytoplasm. It localises to the cytoskeleton. Its subcellular location is the cytosol. The protein localises to the perinuclear region. The protein resides in the nucleus. It is found in the nucleolus. It localises to the cell membrane. Its subcellular location is the cell cortex. The protein localises to the cytoplasmic vesicle membrane. In terms of biological role, actin-binding protein that is involved in actin cytoskeleton assembly and reorganization. Acts as an actin nucleation factor and promotes assembly of actin filaments together with SPIRE1 and SPIRE2. Involved in intracellular vesicle transport along actin fibers, providing a novel link between actin cytoskeleton dynamics and intracellular transport. Required for asymmetric spindle positioning, asymmetric oocyte division and polar body extrusion during female germ cell meiosis. Plays a role in responses to DNA damage, cellular stress and hypoxia by protecting CDKN1A against degradation, and thereby plays a role in stress-induced cell cycle arrest. Also acts in the nucleus: together with SPIRE1 and SPIRE2, promotes assembly of nuclear actin filaments in response to DNA damage in order to facilitate movement of chromatin and repair factors after DNA damage. Protects cells against apoptosis by protecting CDKN1A against degradation. This chain is Formin-2 (Fmn2), found in Mus musculus (Mouse).